Here is a 741-residue protein sequence, read N- to C-terminus: Linoleate 9S-lipoxygenase (741 aa).

The PLAT domain maps to 1–53; that stretch reads IPGAFYIKNFMQVEFYLKSLTLEDIPNHGTIHFICNSWIYNSKVYKSDRIFFA. The Lipoxygenase domain maps to 56-741; the sequence is TYLPSETPAP…SEEGLTFRGI (686 aa). The segment at 108–144 is disordered; sequence ALARPVLGGSTLPYPRRGRTGRPKTKKDPNSEKPSDF. Over residues 123–132 the composition is skewed to basic residues; sequence RRGRTGRPKT. The span at 133–144 shows a compositional bias: basic and acidic residues; the sequence is KKDPNSEKPSDF. Fe cation-binding residues include histidine 407, histidine 412, histidine 598, and asparagine 602.

It belongs to the lipoxygenase family. As to quaternary structure, monomer. Requires Fe cation as cofactor.

The protein resides in the cytoplasm. It catalyses the reaction (9Z,12Z)-octadecadienoate + O2 = (9S)-hydroperoxy-(10E,12Z)-octadecadienoate. The enzyme catalyses (9Z,12Z)-octadecadienoate + O2 = (13S)-hydroperoxy-(9Z,11E)-octadecadienoate. It carries out the reaction (9Z,12Z,15Z)-octadecatrienoate + O2 = (13S)-hydroperoxy-(9Z,11E,15Z)-octadecatrienoate. It functions in the pathway lipid metabolism; oxylipin biosynthesis. Functionally, plant lipoxygenase may be involved in a number of diverse aspects of plant physiology including growth and development, pest resistance, and senescence or responses to wounding. It catalyzes the hydroperoxidation of lipids containing a cis,cis-1,4-pentadiene structure. The chain is Linoleate 9S-lipoxygenase from Phaseolus vulgaris (Kidney bean).